A 316-amino-acid chain; its full sequence is 4-hydroxy-3-methylbut-2-enyl diphosphate reductase (316 aa).

Cys12 contributes to the [4Fe-4S] cluster binding site. Positions 41 and 74 each coordinate (2E)-4-hydroxy-3-methylbut-2-enyl diphosphate. Positions 41 and 74 each coordinate dimethylallyl diphosphate. Isopentenyl diphosphate contacts are provided by His41 and His74. Residue Cys96 participates in [4Fe-4S] cluster binding. Residue His124 coordinates (2E)-4-hydroxy-3-methylbut-2-enyl diphosphate. His124 serves as a coordination point for dimethylallyl diphosphate. His124 contacts isopentenyl diphosphate. Catalysis depends on Glu126, which acts as the Proton donor. Thr167 lines the (2E)-4-hydroxy-3-methylbut-2-enyl diphosphate pocket. Position 197 (Cys197) interacts with [4Fe-4S] cluster. 4 residues coordinate (2E)-4-hydroxy-3-methylbut-2-enyl diphosphate: Ser225, Ser226, Asn227, and Ser269. Residues Ser225, Ser226, Asn227, and Ser269 each contribute to the dimethylallyl diphosphate site. Isopentenyl diphosphate contacts are provided by Ser225, Ser226, Asn227, and Ser269.

It belongs to the IspH family. As to quaternary structure, homodimer. It depends on [4Fe-4S] cluster as a cofactor.

It catalyses the reaction isopentenyl diphosphate + 2 oxidized [2Fe-2S]-[ferredoxin] + H2O = (2E)-4-hydroxy-3-methylbut-2-enyl diphosphate + 2 reduced [2Fe-2S]-[ferredoxin] + 2 H(+). The enzyme catalyses dimethylallyl diphosphate + 2 oxidized [2Fe-2S]-[ferredoxin] + H2O = (2E)-4-hydroxy-3-methylbut-2-enyl diphosphate + 2 reduced [2Fe-2S]-[ferredoxin] + 2 H(+). It functions in the pathway isoprenoid biosynthesis; dimethylallyl diphosphate biosynthesis; dimethylallyl diphosphate from (2E)-4-hydroxy-3-methylbutenyl diphosphate: step 1/1. It participates in isoprenoid biosynthesis; isopentenyl diphosphate biosynthesis via DXP pathway; isopentenyl diphosphate from 1-deoxy-D-xylulose 5-phosphate: step 6/6. Functionally, catalyzes the conversion of 1-hydroxy-2-methyl-2-(E)-butenyl 4-diphosphate (HMBPP) into a mixture of isopentenyl diphosphate (IPP) and dimethylallyl diphosphate (DMAPP). Acts in the terminal step of the DOXP/MEP pathway for isoprenoid precursor biosynthesis. The sequence is that of 4-hydroxy-3-methylbut-2-enyl diphosphate reductase from Klebsiella pneumoniae (strain 342).